The primary structure comprises 232 residues: Orotidine 5'-phosphate decarboxylase (232 aa).

Substrate contacts are provided by residues Asp13, Lys35, 62-71 (DLKFHDIPNT), Thr122, Arg182, Gln191, Gly211, and Arg212. Lys64 (proton donor) is an active-site residue.

It belongs to the OMP decarboxylase family. Type 1 subfamily. Homodimer.

The enzyme catalyses orotidine 5'-phosphate + H(+) = UMP + CO2. The protein operates within pyrimidine metabolism; UMP biosynthesis via de novo pathway; UMP from orotate: step 2/2. In terms of biological role, catalyzes the decarboxylation of orotidine 5'-monophosphate (OMP) to uridine 5'-monophosphate (UMP). This Pseudomonas savastanoi pv. phaseolicola (strain 1448A / Race 6) (Pseudomonas syringae pv. phaseolicola (strain 1448A / Race 6)) protein is Orotidine 5'-phosphate decarboxylase.